The chain runs to 239 residues: Ribonuclease PH (239 aa).

Residues R86 and 124-126 contribute to the phosphate site; that span reads GTR.

Belongs to the RNase PH family. In terms of assembly, homohexameric ring arranged as a trimer of dimers.

The catalysed reaction is tRNA(n+1) + phosphate = tRNA(n) + a ribonucleoside 5'-diphosphate. Its function is as follows. Phosphorolytic 3'-5' exoribonuclease that plays an important role in tRNA 3'-end maturation. Removes nucleotide residues following the 3'-CCA terminus of tRNAs; can also add nucleotides to the ends of RNA molecules by using nucleoside diphosphates as substrates, but this may not be physiologically important. Probably plays a role in initiation of 16S rRNA degradation (leading to ribosome degradation) during starvation. The protein is Ribonuclease PH of Anaeromyxobacter dehalogenans (strain 2CP-1 / ATCC BAA-258).